The following is a 407-amino-acid chain: Large ribosomal subunit protein uL3-like (407 aa).

Positions 1 to 31 (MSHRKFSAPRHGHLGFLPHKRSHRHRGKVKT) are enriched in basic residues. 2 disordered regions span residues 1–35 (MSHR…WPRD) and 383–407 (QEKR…SGDL). Residues 394–407 (KHLEKEKPETSGDL) are compositionally biased toward basic and acidic residues.

It belongs to the universal ribosomal protein uL3 family. In terms of assembly, component of the large ribosomal subunit in striated muscle cells.

Heart- and skeletal muscle-specific component of the ribosome, which regulates muscle function. Component of the large ribosomal subunit in striated muscle cells: replaces the RPL3 paralog in the ribosome in these cells. The ribosome is a large ribonucleoprotein complex responsible for the synthesis of proteins in the cell. Inhibits myotube growth and muscle function. The polypeptide is Large ribosomal subunit protein uL3-like (RPL3L) (Bos taurus (Bovine)).